We begin with the raw amino-acid sequence, 327 residues long: Phenylalanine--tRNA ligase alpha subunit (327 aa).

Glu-252 contacts Mg(2+).

The protein belongs to the class-II aminoacyl-tRNA synthetase family. Phe-tRNA synthetase alpha subunit type 1 subfamily. Tetramer of two alpha and two beta subunits. It depends on Mg(2+) as a cofactor.

It localises to the cytoplasm. It catalyses the reaction tRNA(Phe) + L-phenylalanine + ATP = L-phenylalanyl-tRNA(Phe) + AMP + diphosphate + H(+). This Glaesserella parasuis serovar 5 (strain SH0165) (Haemophilus parasuis) protein is Phenylalanine--tRNA ligase alpha subunit.